A 714-amino-acid chain; its full sequence is MSVNDQITHIGKTLSTTASAFLNYQKSNSNTQDVLTNNGPYKNLLSNTVNNASSTSYFYKRTEHGRFVKNASNTFEDIYSKTRRGDVFRNKFTDNKTCFRMLTYISDDLLNEIPTKEGLKSDADGKLLTEGGENENLRKNASKKETSLFQGFKSYLPIAELAIENTERLNYDTNGTSGTVGAKDVMSKTNERDEIHTELPNFQDSFLIPPGVETKKISSSYSPSALKSFSQTLVNSLEFLNIQKNSTLSEIRDIEVEVENLRQKKEKLLGKIANIEQNQLLLEDNLKQIDDRLDFLEEYGLEVIEANSDENAEDDGMSERKALKNDAIRNEGVTTESISSEASNLPPRRRQQLRDDNSLNRLGAFYSKSKKRHRKSFPTFQQLYEPGTKIGSIMSTHDDFLTCLDFDAPFGTLCTAGYLDHTVKIWDLSKQNKIGELAGHLATINCMQINRDYGTLVTGGRDAALKLWNLNLAQQLYQETQNLTSPTNHIDSPCVHTFEAHTDEVTALSLDPSFLVSGSQDRTIRQWDLRSGKCLQTIDLSFANVLTTSTNVDLSKSTLLTQRNERPSIGALQSFDAALATGTKDGVVRLWDLRSGKVIRTLKGHTDAITSLKFDSACLVTGSYDRTVRIWDLRTGLLNKFHAYSAPVLSLDLFQENAAVVVADEPSVQIYDSEKDESWSCVEQGNETSVSTVKYKENYMVEGRENGDVNIWAV.

Residues 240-298 (LNIQKNSTLSEIRDIEVEVENLRQKKEKLLGKIANIEQNQLLLEDNLKQIDDRLDFLEE) are a coiled coil. The interval 323-354 (LKNDAIRNEGVTTESISSEASNLPPRRRQQLR) is disordered. Residues 332–343 (GVTTESISSEAS) show a composition bias toward polar residues. Serine 376 carries the post-translational modification Phosphoserine. WD repeat units follow at residues 396–436 (THDD…KIGE), 439–478 (GHLA…QLYQ), 500–539 (AHTD…QTID), 561–603 (TQRN…RTLK), 604–642 (GHTD…NKFH), 644–681 (YSAP…SWSC), and 685–714 (GNET…IWAV).

It belongs to the WD repeat MDV1/CAF4 family. As to quaternary structure, interacts with CAF4, DNM1 and FIS1, components of the mitochondrial fission machinery. Interacts via its N-terminal, coiled-coil extension (NTE) with FIS1, and via its WD repeats with DNM1.

The protein localises to the mitochondrion outer membrane. Its function is as follows. Involved in mitochondrial fission. Has a partially redundant function to CAF4 in acting as an adapter protein, binding to FIS1 on the mitochondrial outer membrane and recruiting the dynamin-like GTPase DNM1 to form mitochondrial fission complexes. Formation of these complexes is required to promote constriction and fission of the mitochondrial compartment at a late step in mitochondrial division. The sequence is that of Mitochondrial division protein 1 (MDV1) from Saccharomyces cerevisiae (strain ATCC 204508 / S288c) (Baker's yeast).